The primary structure comprises 136 residues: Large ribosomal subunit protein bL21 (136 aa).

Over residues 1-21 (MSETPSKAKASKPAESKAQAS) the composition is skewed to low complexity. Residues 1-25 (MSETPSKAKASKPAESKAQASDSSG) are disordered.

It belongs to the bacterial ribosomal protein bL21 family. As to quaternary structure, part of the 50S ribosomal subunit. Contacts protein L20.

Functionally, this protein binds to 23S rRNA in the presence of protein L20. The sequence is that of Large ribosomal subunit protein bL21 from Synechococcus sp. (strain RCC307).